A 194-amino-acid chain; its full sequence is Dihydrofolate reductase HdrB (194 aa).

Residues 18–194 (RFVLVAAVAD…ADRGAEESDE (177 aa)) form the DHFR domain. NADP(+)-binding positions include Ala-24 and 30 to 36 (VIGRDGT). Asp-44 is a substrate binding site. 62–63 (KT) lines the NADP(+) pocket. Residues Arg-69 and Arg-78 each contribute to the substrate site. NADP(+) is bound by residues 84–85 (TT) and 123–130 (GGATVYEQ). A substrate-binding site is contributed by Thr-141. Residues 173-194 (SFVTYERKQPAAADRGAEESDE) form a disordered region.

Belongs to the dihydrofolate reductase family.

The catalysed reaction is (6S)-5,6,7,8-tetrahydrofolate + NADP(+) = 7,8-dihydrofolate + NADPH + H(+). The protein operates within cofactor biosynthesis; tetrahydrofolate biosynthesis; 5,6,7,8-tetrahydrofolate from 7,8-dihydrofolate: step 1/1. With respect to regulation, maximum activity at KCl concentration of 0.5 M and activity decreases with increasing concentration of KCl. Functionally, key enzyme in folate metabolism. Catalyzes an essential reaction for de novo glycine and purine synthesis, and for DNA precursor synthesis. The polypeptide is Dihydrofolate reductase HdrB (hdrB) (Haloferax volcanii (Halobacterium volcanii)).